The chain runs to 476 residues: Siroheme synthase 1 (476 aa).

The precorrin-2 dehydrogenase /sirohydrochlorin ferrochelatase stretch occupies residues 1 to 203 (MDYLPIFADL…GQTAEAQRQL (203 aa)). NAD(+) contacts are provided by residues 22-23 (EV) and 43-44 (QS). S128 is subject to Phosphoserine. The interval 219–476 (GEIALVGAGP…VSRPAVVNLA (258 aa)) is uroporphyrinogen-III C-methyltransferase. Position 228 (P228) interacts with S-adenosyl-L-methionine. The active-site Proton acceptor is D251. K273 acts as the Proton donor in catalysis. S-adenosyl-L-methionine-binding positions include 304 to 306 (GGD), I309, 334 to 335 (TA), M386, and G415.

This sequence in the N-terminal section; belongs to the precorrin-2 dehydrogenase / sirohydrochlorin ferrochelatase family. In the C-terminal section; belongs to the precorrin methyltransferase family.

It carries out the reaction uroporphyrinogen III + 2 S-adenosyl-L-methionine = precorrin-2 + 2 S-adenosyl-L-homocysteine + H(+). The enzyme catalyses precorrin-2 + NAD(+) = sirohydrochlorin + NADH + 2 H(+). The catalysed reaction is siroheme + 2 H(+) = sirohydrochlorin + Fe(2+). It functions in the pathway cofactor biosynthesis; adenosylcobalamin biosynthesis; precorrin-2 from uroporphyrinogen III: step 1/1. The protein operates within cofactor biosynthesis; adenosylcobalamin biosynthesis; sirohydrochlorin from precorrin-2: step 1/1. It participates in porphyrin-containing compound metabolism; siroheme biosynthesis; precorrin-2 from uroporphyrinogen III: step 1/1. Its pathway is porphyrin-containing compound metabolism; siroheme biosynthesis; siroheme from sirohydrochlorin: step 1/1. It functions in the pathway porphyrin-containing compound metabolism; siroheme biosynthesis; sirohydrochlorin from precorrin-2: step 1/1. Multifunctional enzyme that catalyzes the SAM-dependent methylations of uroporphyrinogen III at position C-2 and C-7 to form precorrin-2 via precorrin-1. Then it catalyzes the NAD-dependent ring dehydrogenation of precorrin-2 to yield sirohydrochlorin. Finally, it catalyzes the ferrochelation of sirohydrochlorin to yield siroheme. The sequence is that of Siroheme synthase 1 from Serratia proteamaculans (strain 568).